The following is a 342-amino-acid chain: Protease HtpX homolog (342 aa).

Helical transmembrane passes span 6–26 (TAMLLAFMTALFMGVGFLIGG) and 28–48 (GGMMIALVIAGAMNLFSYWNS). Residue His130 coordinates Zn(2+). The active site involves Glu131. His134 serves as a coordination point for Zn(2+). The next 2 helical transmembrane spans lie at 145–165 (ITATLAGAISMLGNFAFFFGG) and 173–193 (GGGIIGPLVAMIVAPFAAMLV). Glu202 contacts Zn(2+). Positions 290–342 (PQHSKPAASGPWGSSAERSTDDPWGVKGGASTRSVPKIGRRGKDNDAPKGPWN) are disordered.

Belongs to the peptidase M48B family. Requires Zn(2+) as cofactor.

The protein resides in the cell inner membrane. The sequence is that of Protease HtpX homolog from Allorhizobium ampelinum (strain ATCC BAA-846 / DSM 112012 / S4) (Agrobacterium vitis (strain S4)).